The primary structure comprises 89 residues: Small ribosomal subunit protein uS15 (89 aa).

The protein belongs to the universal ribosomal protein uS15 family. As to quaternary structure, part of the 30S ribosomal subunit. Forms a bridge to the 50S subunit in the 70S ribosome, contacting the 23S rRNA.

Functionally, one of the primary rRNA binding proteins, it binds directly to 16S rRNA where it helps nucleate assembly of the platform of the 30S subunit by binding and bridging several RNA helices of the 16S rRNA. Its function is as follows. Forms an intersubunit bridge (bridge B4) with the 23S rRNA of the 50S subunit in the ribosome. This is Small ribosomal subunit protein uS15 from Chlamydia felis (strain Fe/C-56) (Chlamydophila felis).